The following is a 396-amino-acid chain: 2-(3-amino-3-carboxypropyl)histidine synthase subunit 1 (396 aa).

3 residues coordinate [4Fe-4S] cluster: C89, C194, and C323. Positions 372 to 396 are disordered; the sequence is TNNNEANRPKREKRKPHIVVRTEAS.

Belongs to the DPH1/DPH2 family. DPH1 subfamily. As to quaternary structure, component of the 2-(3-amino-3-carboxypropyl)histidine synthase complex composed of dph-1, dph-2, dph-3 and a NADH-dependent reductase. [4Fe-4S] cluster is required as a cofactor.

It catalyses the reaction L-histidyl-[translation elongation factor 2] + S-adenosyl-L-methionine = 2-[(3S)-amino-3-carboxypropyl]-L-histidyl-[translation elongation factor 2] + S-methyl-5'-thioadenosine + H(+). It functions in the pathway protein modification; peptidyl-diphthamide biosynthesis. Functionally, catalyzes the first step of diphthamide biosynthesis, a post-translational modification of histidine which occurs in elongation factor 2. Dph-1 and dph-2 transfer a 3-amino-3-carboxypropyl (ACP) group from S-adenosyl-L-methionine (SAM) to a histidine residue, the reaction is assisted by a reduction system comprising dph-3 and a NADH-dependent reductase. This is 2-(3-amino-3-carboxypropyl)histidine synthase subunit 1 (dph-1) from Caenorhabditis elegans.